Here is a 496-residue protein sequence, read N- to C-terminus: 3-octaprenyl-4-hydroxybenzoate carboxy-lyase (496 aa).

Residue Asn181 coordinates Mn(2+). Residues 184-186, 198-200, and 203-204 each bind prenylated FMN; these read IYR, RWL, and RG. Glu247 lines the Mn(2+) pocket. Residue Asp296 is the Proton donor of the active site.

It belongs to the UbiD family. Homohexamer. It depends on prenylated FMN as a cofactor. Requires Mn(2+) as cofactor.

The protein localises to the cell membrane. The enzyme catalyses a 4-hydroxy-3-(all-trans-polyprenyl)benzoate + H(+) = a 2-(all-trans-polyprenyl)phenol + CO2. Its pathway is cofactor biosynthesis; ubiquinone biosynthesis. Its function is as follows. Catalyzes the decarboxylation of 3-octaprenyl-4-hydroxy benzoate to 2-octaprenylphenol, an intermediate step in ubiquinone biosynthesis. The polypeptide is 3-octaprenyl-4-hydroxybenzoate carboxy-lyase (Azoarcus sp. (strain BH72)).